We begin with the raw amino-acid sequence, 378 residues long: Spermidine/putrescine import ATP-binding protein PotA (378 aa).

In terms of domain architecture, ABC transporter spans 18–248 (VQLAGIRKCF…PKNLFVAGFI (231 aa)). Position 50 to 57 (50 to 57 (GPSGCGKT)) interacts with ATP.

The protein belongs to the ABC transporter superfamily. Spermidine/putrescine importer (TC 3.A.1.11.1) family. In terms of assembly, the complex is composed of two ATP-binding proteins (PotA), two transmembrane proteins (PotB and PotC) and a solute-binding protein (PotD).

It localises to the cell inner membrane. The enzyme catalyses ATP + H2O + polyamine-[polyamine-binding protein]Side 1 = ADP + phosphate + polyamineSide 2 + [polyamine-binding protein]Side 1.. Part of the ABC transporter complex PotABCD involved in spermidine/putrescine import. Responsible for energy coupling to the transport system. In Shigella dysenteriae serotype 1 (strain Sd197), this protein is Spermidine/putrescine import ATP-binding protein PotA.